Here is a 566-residue protein sequence, read N- to C-terminus: Peroxisomal leader peptide-processing protease (566 aa).

A serine protease region spans residues 319-531; sequence ALAALLPPEV…LQPALQQYSQ (213 aa). Residues His372, Asp408, and Ser481 each act as charge relay system in the active site.

The protein belongs to the peptidase S1B family. As to quaternary structure, homodimer. Forms a heterodimer with the C-terminal cleavage product (45 kDa form). Forms a heterodimer with the N-terminal cleavage product (15 kDa form). Interacts with PEX5. Interacts with LONP2. Post-translationally, self-cleavage gives rise to an N-terminal 15-kDa fragment and C-terminal 45-kDa fragment upon import into the peroxisomes. The full-lengh TYSND1 is the active the proteolytic processing of PTS1- and PTS2-proteins and in self-cleavage, and intermolecular self-cleavage of TYSND1 down-regulates its protease activity.

It is found in the peroxisome. Its function is as follows. Peroxisomal protease that mediates both the removal of the leader peptide from proteins containing a PTS2 target sequence and processes several PTS1-containing proteins. Catalyzes the processing of PTS1-proteins involved in the peroxisomal beta-oxidation of fatty acids. This chain is Peroxisomal leader peptide-processing protease (TYSND1), found in Homo sapiens (Human).